Here is a 268-residue protein sequence, read N- to C-terminus: L-gamma-glutamyl-L-propargylglycine hydroxylase (268 aa).

The cofactor is Fe(2+).

It catalyses the reaction L-gamma-glutamyl-L-propargylglycine + 2-oxoglutarate + O2 = L-gamma-glutamyl-(3R)-L-beta-ethynylserine + succinate + CO2. The protein operates within amino-acid metabolism. It functions in the pathway antibiotic biosynthesis. Its function is as follows. Involved in the biosynthesis of terminal alkyne-containing amino acids such as L-beta-ethynylserine, that are produced as antibiotics by S.cattleya. Catalyzes the hydroxylation of the dipeptide L-gamma-glutamyl-L-propargylglycine, leading to L-gamma-glutamyl-L-beta-ethynylserine. Cannot use L-propargylglycine as substrate. The protein is L-gamma-glutamyl-L-propargylglycine hydroxylase of Streptantibioticus cattleyicolor (strain ATCC 35852 / DSM 46488 / JCM 4925 / NBRC 14057 / NRRL 8057) (Streptomyces cattleya).